The sequence spans 394 residues: Cysteine desulfurase IscS (394 aa).

Residues 72 to 73, asparagine 152, glutamine 180, and 200 to 202 each bind pyridoxal 5'-phosphate; these read GT and SAH. At lysine 203 the chain carries N6-(pyridoxal phosphate)lysine. Threonine 238 serves as a coordination point for pyridoxal 5'-phosphate. The active-site Cysteine persulfide intermediate is cysteine 326. Cysteine 326 provides a ligand contact to [2Fe-2S] cluster.

Belongs to the class-V pyridoxal-phosphate-dependent aminotransferase family. NifS/IscS subfamily. In terms of assembly, homodimer. Forms a heterotetramer with IscU, interacts with other sulfur acceptors. Requires pyridoxal 5'-phosphate as cofactor.

The protein localises to the cytoplasm. The enzyme catalyses (sulfur carrier)-H + L-cysteine = (sulfur carrier)-SH + L-alanine. It functions in the pathway cofactor biosynthesis; iron-sulfur cluster biosynthesis. Master enzyme that delivers sulfur to a number of partners involved in Fe-S cluster assembly, tRNA modification or cofactor biosynthesis. Catalyzes the removal of elemental sulfur atoms from cysteine to produce alanine. Functions as a sulfur delivery protein for Fe-S cluster synthesis onto IscU, an Fe-S scaffold assembly protein, as well as other S acceptor proteins. The sequence is that of Cysteine desulfurase IscS from Dictyoglomus turgidum (strain DSM 6724 / Z-1310).